A 240-amino-acid polypeptide reads, in one-letter code: Phosphatidylserine decarboxylase proenzyme (240 aa).

The Schiff-base intermediate with substrate; via pyruvic acid role is filled by Ser-209. A Pyruvic acid (Ser); by autocatalysis modification is found at Ser-209.

Belongs to the phosphatidylserine decarboxylase family. PSD-A subfamily. Heterodimer of a large membrane-associated beta subunit and a small pyruvoyl-containing alpha subunit. The cofactor is pyruvate. Is synthesized initially as an inactive proenzyme. Formation of the active enzyme involves a self-maturation process in which the active site pyruvoyl group is generated from an internal serine residue via an autocatalytic post-translational modification. Two non-identical subunits are generated from the proenzyme in this reaction, and the pyruvate is formed at the N-terminus of the alpha chain, which is derived from the carboxyl end of the proenzyme. The post-translation cleavage follows an unusual pathway, termed non-hydrolytic serinolysis, in which the side chain hydroxyl group of the serine supplies its oxygen atom to form the C-terminus of the beta chain, while the remainder of the serine residue undergoes an oxidative deamination to produce ammonia and the pyruvoyl prosthetic group on the alpha chain.

The protein resides in the cell membrane. It carries out the reaction a 1,2-diacyl-sn-glycero-3-phospho-L-serine + H(+) = a 1,2-diacyl-sn-glycero-3-phosphoethanolamine + CO2. The protein operates within phospholipid metabolism; phosphatidylethanolamine biosynthesis; phosphatidylethanolamine from CDP-diacylglycerol: step 2/2. Its function is as follows. Catalyzes the formation of phosphatidylethanolamine (PtdEtn) from phosphatidylserine (PtdSer). This Mycobacterium ulcerans (strain Agy99) protein is Phosphatidylserine decarboxylase proenzyme.